The chain runs to 347 residues: MLASVAGPVSLALVLLLCTRPATGQDCSAQCQCAAEAAPRCPAGVSLVLDGCGCCRVCAKQLGELCTERDPCDPHKGLFCDFGSPANRKIGVCTAKDGAPCVFGGSVYRSGESFQSSCKYQCTCLDGAVGCVPLCSMDVRLPSPDCPFPRRVKLPGKCCEEWVCDEPKDRTVVGPALAAYRLEDTFGPDPTMMRANCLVQTTEWSACSKTCGMGISTRVTNDNTFCRLEKQSRLCMVRPCEADLEENIKKGKKCIRTPKIAKPVKFELSGCTSVKTYRAKFCGVCTDGRCCTPHRTTTLPVEFKCPDGEIMKKNMMFIKTCACHYNCPGDNDIFESLYYRKMYGDMA.

Positions 1 to 24 (MLASVAGPVSLALVLLLCTRPATG) are cleaved as a signal peptide. One can recognise an IGFBP N-terminal domain in the interval 25 to 96 (QDCSAQCQCA…NRKIGVCTAK (72 aa)). Disulfide bonds link C27/C52, C31/C54, C33/C55, C41/C58, C66/C80, and C72/C93. Positions 99 to 165 (APCVFGGSVY…GKCCEEWVCD (67 aa)) constitute a VWFC domain. A TSP type-1 domain is found at 196–241 (NCLVQTTEWSACSKTCGMGISTRVTNDNTFCRLEKQSRLCMVRPCE). Residues 245-347 (EENIKKGKKC…YYRKMYGDMA (103 aa)) form a heparin-binding region. 5 disulfides stabilise this stretch: C254/C291, C271/C305, C282/C321, C285/C323, and C290/C327. Positions 254-328 (CIRTPKIAKP…KTCACHYNCP (75 aa)) constitute a CTCK domain.

It belongs to the CCN family. As to quaternary structure, monomer. Interacts with TSKU.

It is found in the secreted. The protein resides in the extracellular space. Its subcellular location is the extracellular matrix. Functionally, major connective tissue mitoattractant secreted by vascular endothelial cells. Promotes proliferation and differentiation of chondrocytes. Is involved in the stimulation of osteoblast differentiation and has a critical role in osteogenesis. Mediates heparin- and divalent cation-dependent cell adhesion in many cell types including fibroblasts, myofibroblasts, endothelial and epithelial cells. Enhances fibroblast growth factor-induced DNA synthesis. The protein is CCN family member 2 of Rattus norvegicus (Rat).